Reading from the N-terminus, the 532-residue chain is 3-hydroxy-3-methylglutaryl-coenzyme A reductase 1 (532 aa).

A helical transmembrane segment spans residues 63–83 (FATVVYLVSLFAHPDAPATTT). Residues 77-117 (DAPATTTGDDDDGQGGSRRARPAAAEPAPMHGHGGGMMEAD) are linker. The segment at 78–111 (APATTTGDDDDGQGGSRRARPAAAEPAPMHGHGG) is disordered. The segment covering 98 to 107 (PAAAEPAPMH) has biased composition (low complexity). Residues 118 to 532 (DEEIVAAVAS…SSKDVAKAAS (415 aa)) form a catalytic region. Catalysis depends on Glu-211, which acts as the Charge relay system. Asn-275 carries an N-linked (GlcNAc...) asparagine glycan. Catalysis depends on charge relay system residues Lys-343 and Asp-419. The Proton donor role is filled by His-517. Asn-521 carries N-linked (GlcNAc...) asparagine glycosylation.

This sequence belongs to the HMG-CoA reductase family.

The protein localises to the endoplasmic reticulum membrane. The catalysed reaction is (R)-mevalonate + 2 NADP(+) + CoA = (3S)-3-hydroxy-3-methylglutaryl-CoA + 2 NADPH + 2 H(+). The protein operates within metabolic intermediate biosynthesis; (R)-mevalonate biosynthesis; (R)-mevalonate from acetyl-CoA: step 3/3. Its function is as follows. Catalyzes the synthesis of mevalonate. The specific precursor of all isoprenoid compounds present in plants. The polypeptide is 3-hydroxy-3-methylglutaryl-coenzyme A reductase 1 (HMG1) (Oryza sativa subsp. japonica (Rice)).